The sequence spans 173 residues: Translation initiation factor IF-3 (173 aa).

The protein belongs to the IF-3 family. As to quaternary structure, monomer.

It is found in the cytoplasm. In terms of biological role, IF-3 binds to the 30S ribosomal subunit and shifts the equilibrium between 70S ribosomes and their 50S and 30S subunits in favor of the free subunits, thus enhancing the availability of 30S subunits on which protein synthesis initiation begins. The protein is Translation initiation factor IF-3 of Ehrlichia chaffeensis (strain ATCC CRL-10679 / Arkansas).